Here is a 93-residue protein sequence, read N- to C-terminus: Small ribosomal subunit protein uS19c (93 aa).

Belongs to the universal ribosomal protein uS19 family.

Its subcellular location is the plastid. The protein localises to the chloroplast. Its function is as follows. Protein S19 forms a complex with S13 that binds strongly to the 16S ribosomal RNA. This is Small ribosomal subunit protein uS19c from Zygnema circumcarinatum (Green alga).